A 198-amino-acid polypeptide reads, in one-letter code: Fucoxanthin-chlorophyll a-c binding protein B, chloroplastic (198 aa).

The N-terminal 31 residues, 1–31 (MKFTVFASLFASAAAFAPAQQAARTSVATNM), are a transit peptide targeting the chloroplast. 3 helical membrane-spanning segments follow: residues 73–94 (ISML…GGDI), 114–134 (IPQA…TSVM), and 174–196 (GRAA…NILP).

This sequence belongs to the fucoxanthin chlorophyll protein family. As to quaternary structure, the LHC complex of chromophytic algae is composed of fucoxanthin, chlorophyll A and C bound non-covalently by fucoxanthin chlorophyll proteins (FCPs). The ratio of the pigments in LHC; fucoxanthin: chlorophyll C: chlorophyll A; (0.6-1): (0.1-0.3): (1).

It is found in the plastid. The protein localises to the chloroplast thylakoid membrane. The light-harvesting complex (LHC) functions as a light receptor, it captures and delivers excitation energy to photosystems with which it is closely associated. Energy is transferred from the carotenoid and chlorophyll C (or B) to chlorophyll A and the photosynthetic reaction centers where it is used to synthesize ATP and reducing power. This Phaeodactylum tricornutum (Diatom) protein is Fucoxanthin-chlorophyll a-c binding protein B, chloroplastic (FCPB).